The sequence spans 248 residues: Small ribosomal subunit protein uS3 (248 aa).

One can recognise a KH type-2 domain in the interval 38–106 (IREFLSKGLD…QVALNILEVK (69 aa)). The segment covering 214 to 230 (SEINAPAERRGRGDRNA) has biased composition (basic and acidic residues). Residues 214–248 (SEINAPAERRGRGDRNARPRRGGQRRQRAEQKQEG) are disordered.

Belongs to the universal ribosomal protein uS3 family. In terms of assembly, part of the 30S ribosomal subunit. Forms a tight complex with proteins S10 and S14.

Binds the lower part of the 30S subunit head. Binds mRNA in the 70S ribosome, positioning it for translation. The chain is Small ribosomal subunit protein uS3 from Corynebacterium glutamicum (strain R).